The sequence spans 179 residues: Cytochrome c-type biogenesis protein CcmE (179 aa).

The Cytoplasmic portion of the chain corresponds to 1-8; it reads MNPRRKSR. The chain crosses the membrane as a helical; Signal-anchor for type II membrane protein span at residues 9 to 29; that stretch reads LTIILFVLLGVTIASSLVLYA. The Periplasmic segment spans residues 30–179; it reads LRQNIDLFYT…AVNSVEEGKK (150 aa). Heme contacts are provided by H131 and Y135. Composition is skewed to basic and acidic residues over residues 138–148 and 161–179; these read PDLSEKMEQVH and ESDRDRLDKAVNSVEEGKK. The interval 138–179 is disordered; that stretch reads PDLSEKMEQVHKPMGISNQDMQGESDRDRLDKAVNSVEEGKK.

The protein belongs to the CcmE/CycJ family.

The protein resides in the cell inner membrane. Heme chaperone required for the biogenesis of c-type cytochromes. Transiently binds heme delivered by CcmC and transfers the heme to apo-cytochromes in a process facilitated by CcmF and CcmH. This is Cytochrome c-type biogenesis protein CcmE from Mannheimia succiniciproducens (strain KCTC 0769BP / MBEL55E).